The following is a 72-amino-acid chain: Putative beta-neurotoxin (72 aa).

The first 7 residues, 1-7 (IDMVVEC), serve as a signal peptide directing secretion. In terms of domain architecture, LCN-type CS-alpha/beta spans 9 to 71 (KDGYLMEHDG…TWSRATNRCG (63 aa)). 4 disulfides stabilise this stretch: C19/C70, C23/C45, C31/C51, and C35/C53.

In terms of tissue distribution, expressed by the venom gland.

It is found in the secreted. Beta toxins bind voltage-independently at site-4 of sodium channels (Nav) and shift the voltage of activation toward more negative potentials thereby affecting sodium channel activation and promoting spontaneous and repetitive firing. This is Putative beta-neurotoxin from Tityus pachyurus (Colombian scorpion).